We begin with the raw amino-acid sequence, 900 residues long: Alanine--tRNA ligase (900 aa).

Zn(2+) contacts are provided by histidine 568, histidine 572, cysteine 672, and histidine 676.

It belongs to the class-II aminoacyl-tRNA synthetase family. It depends on Zn(2+) as a cofactor.

It is found in the cytoplasm. It carries out the reaction tRNA(Ala) + L-alanine + ATP = L-alanyl-tRNA(Ala) + AMP + diphosphate. Its function is as follows. Catalyzes the attachment of alanine to tRNA(Ala) in a two-step reaction: alanine is first activated by ATP to form Ala-AMP and then transferred to the acceptor end of tRNA(Ala). Also edits incorrectly charged Ser-tRNA(Ala) and Gly-tRNA(Ala) via its editing domain. This Mycoplasma genitalium (strain ATCC 33530 / DSM 19775 / NCTC 10195 / G37) (Mycoplasmoides genitalium) protein is Alanine--tRNA ligase.